Here is a 362-residue protein sequence, read N- to C-terminus: Molybdenum import ATP-binding protein ModC (362 aa).

The 235-residue stretch at 2-236 folds into the ABC transporter domain; it reads ASPIEVRLQM…LDLPLAMGSD (235 aa). 34–41 contributes to the ATP binding site; the sequence is GPSGSGKT. Residues 297-362 form the Mop domain; that stretch reads QSSILNRLPV…AQIKAVAVLA (66 aa).

This sequence belongs to the ABC transporter superfamily. Molybdate importer (TC 3.A.1.8) family. In terms of assembly, the complex is composed of two ATP-binding proteins (ModC), two transmembrane proteins (ModB) and a solute-binding protein (ModA).

The protein resides in the cell inner membrane. It catalyses the reaction molybdate(out) + ATP + H2O = molybdate(in) + ADP + phosphate + H(+). In terms of biological role, part of the ABC transporter complex ModABC involved in molybdenum import. Responsible for energy coupling to the transport system. This is Molybdenum import ATP-binding protein ModC from Pseudomonas syringae pv. syringae (strain B728a).